The following is a 542-amino-acid chain: Chaperonin GroEL (542 aa).

Residues 29–32 (TMGP), 86–90 (DGTTT), Gly-413, 476–478 (NAA), and Asp-492 each bind ATP. The segment at 521-542 (KPDPNANNQAPAAPQGGMGGMM) is disordered. Residues 524–535 (PNANNQAPAAPQ) show a composition bias toward low complexity.

This sequence belongs to the chaperonin (HSP60) family. As to quaternary structure, forms a cylinder of 14 subunits composed of two heptameric rings stacked back-to-back. Interacts with the co-chaperonin GroES.

It is found in the cytoplasm. It carries out the reaction ATP + H2O + a folded polypeptide = ADP + phosphate + an unfolded polypeptide.. In terms of biological role, together with its co-chaperonin GroES, plays an essential role in assisting protein folding. The GroEL-GroES system forms a nano-cage that allows encapsulation of the non-native substrate proteins and provides a physical environment optimized to promote and accelerate protein folding. This Limosilactobacillus reuteri subsp. reuteri (strain JCM 1112) (Lactobacillus reuteri) protein is Chaperonin GroEL.